A 417-amino-acid chain; its full sequence is Tryptophan synthase beta chain (417 aa).

Lysine 99 carries the post-translational modification N6-(pyridoxal phosphate)lysine.

The protein belongs to the TrpB family. In terms of assembly, tetramer of two alpha and two beta chains. It depends on pyridoxal 5'-phosphate as a cofactor.

It carries out the reaction (1S,2R)-1-C-(indol-3-yl)glycerol 3-phosphate + L-serine = D-glyceraldehyde 3-phosphate + L-tryptophan + H2O. The protein operates within amino-acid biosynthesis; L-tryptophan biosynthesis; L-tryptophan from chorismate: step 5/5. The beta subunit is responsible for the synthesis of L-tryptophan from indole and L-serine. The protein is Tryptophan synthase beta chain (trpB) of Corynebacterium glutamicum (strain ATCC 13032 / DSM 20300 / JCM 1318 / BCRC 11384 / CCUG 27702 / LMG 3730 / NBRC 12168 / NCIMB 10025 / NRRL B-2784 / 534).